Reading from the N-terminus, the 225-residue chain is Chromosome partition protein MukE (225 aa).

Residues Arg-197–Glu-225 are disordered. The span at Asp-212 to Glu-225 shows a compositional bias: acidic residues.

It belongs to the MukE family. In terms of assembly, interacts, and probably forms a ternary complex, with MukF and MukB. The complex formation is stimulated by calcium or magnesium.

It is found in the cytoplasm. Its subcellular location is the nucleoid. Involved in chromosome condensation, segregation and cell cycle progression. May participate in facilitating chromosome segregation by condensation DNA from both sides of a centrally located replisome during cell division. Probably acts via its interaction with MukB and MukF. The protein is Chromosome partition protein MukE of Escherichia coli O157:H7.